A 362-amino-acid polypeptide reads, in one-letter code: Zinc transporter 9 (362 aa).

An N-terminal signal peptide occupies residues 1-21 (MAFDLKLTACLLLAVFSLAAA). Topologically, residues 22–42 (ADCECQPSDEGHDAAKSRTLK) are extracellular. Residues 43-63 (VIAIFCILVGSSAGCAIPSLG) traverse the membrane as a helical segment. The Cytoplasmic segment spans residues 64–74 (RRFPALRPDTS). The chain crosses the membrane as a helical span at residues 75–95 (LFFALKAFAAGVILATAFVHI). Residues 96-120 (LPVSFDKLGSPCLVDGPWRKYPFTG) are Extracellular-facing. Residues 121 to 141 (LVAMLAAVATLLLDTIATGYF) form a helical membrane-spanning segment. The Cytoplasmic segment spans residues 142-207 (LQRAQDSRGA…EDRAKLVRHR (66 aa)). The helical transmembrane segment at 208-228 (VISQVFELGIIVHSIIIGISL) threads the bilayer. Over 229-239 (GASESPSTIRP) the chain is Extracellular. The chain crosses the membrane as a helical span at residues 240-260 (LVAALTFHQFFEGIGLGGCIV). Over 261-269 (QARFHLKSA) the chain is Cytoplasmic. A helical membrane pass occupies residues 270–290 (VTMAIFFSLTTPVGIMIGIGI). Residues 291–301 (SSAYNENSPTA) are Extracellular-facing. The chain crosses the membrane as a helical span at residues 302-322 (LIVEGILDAAAAGILNYMALV). At 323 to 341 (DLLAEDFMNPRVRKSGRLQ) the chain is on the cytoplasmic side. The chain crosses the membrane as a helical span at residues 342 to 362 (LIISILLLVGIALMSLLGIWA).

Belongs to the ZIP transporter (TC 2.A.5) family.

It is found in the cell membrane. Its function is as follows. Zinc transporter that may be involved in zinc uptake from the rhizosphere. The protein is Zinc transporter 9 (ZIP9) of Oryza sativa subsp. japonica (Rice).